The chain runs to 379 residues: Succinyl-diaminopimelate desuccinylase (379 aa).

Histidine 70 is a Zn(2+) binding site. Residue aspartate 72 is part of the active site. Aspartate 103 is a binding site for Zn(2+). Glutamate 137 serves as the catalytic Proton acceptor. Zn(2+)-binding residues include glutamate 138, glutamate 166, and histidine 352.

It belongs to the peptidase M20A family. DapE subfamily. Homodimer. The cofactor is Zn(2+). It depends on Co(2+) as a cofactor.

It catalyses the reaction N-succinyl-(2S,6S)-2,6-diaminopimelate + H2O = (2S,6S)-2,6-diaminopimelate + succinate. Its pathway is amino-acid biosynthesis; L-lysine biosynthesis via DAP pathway; LL-2,6-diaminopimelate from (S)-tetrahydrodipicolinate (succinylase route): step 3/3. Its function is as follows. Catalyzes the hydrolysis of N-succinyl-L,L-diaminopimelic acid (SDAP), forming succinate and LL-2,6-diaminopimelate (DAP), an intermediate involved in the bacterial biosynthesis of lysine and meso-diaminopimelic acid, an essential component of bacterial cell walls. This chain is Succinyl-diaminopimelate desuccinylase, found in Shewanella baltica (strain OS195).